Consider the following 391-residue polypeptide: Histidinol-phosphate aminotransferase (391 aa).

The residue at position 248 (lysine 248) is an N6-(pyridoxal phosphate)lysine.

This sequence belongs to the class-II pyridoxal-phosphate-dependent aminotransferase family. Histidinol-phosphate aminotransferase subfamily. In terms of assembly, homodimer. Pyridoxal 5'-phosphate serves as cofactor.

The enzyme catalyses L-histidinol phosphate + 2-oxoglutarate = 3-(imidazol-4-yl)-2-oxopropyl phosphate + L-glutamate. It functions in the pathway amino-acid biosynthesis; L-histidine biosynthesis; L-histidine from 5-phospho-alpha-D-ribose 1-diphosphate: step 7/9. This Shewanella oneidensis (strain ATCC 700550 / JCM 31522 / CIP 106686 / LMG 19005 / NCIMB 14063 / MR-1) protein is Histidinol-phosphate aminotransferase.